The sequence spans 599 residues: Pentatricopeptide repeat-containing protein At3g62540, mitochondrial (599 aa).

The N-terminal 99 residues, 1–99 (MAAAPWLYLS…RGFSSGSSNV (99 aa)), are a transit peptide targeting the mitochondrion. PPR repeat units follow at residues 194–228 (ASRT…GLLT), 230–262 (ETFT…KFKI), 263–293 (GVET…LKER), 297–331 (NMMT…GLKP), 332–366 (DIVA…GPCP), 367–401 (NVRS…GLQP), 402–436 (DAAV…GHPP), 437–471 (DGKT…EIEP), 472–506 (SIHT…GICP), and 507–541 (DDNS…GMKT).

Belongs to the PPR family. P subfamily.

The protein localises to the mitochondrion. The protein is Pentatricopeptide repeat-containing protein At3g62540, mitochondrial of Arabidopsis thaliana (Mouse-ear cress).